The sequence spans 457 residues: Autophagy-related protein 14 (457 aa).

Residues 31–109 (RIENVMALIE…TRRAALSRRK (79 aa)) adopt a coiled-coil conformation. Disordered stretches follow at residues 54–73 (ETNAPTKDRKDALQAQQRTA), 252–274 (PSQASVSSPSSTTDTESQRVSRP), and 433–457 (NKNLLMGDKSSPRRGTSGWMRVKNR). Residues 253-266 (SQASVSSPSSTTDT) are compositionally biased toward low complexity.

It belongs to the ATG14 family. In terms of assembly, component of the autophagy-specific VPS34 PI3-kinase complex I.

It is found in the preautophagosomal structure membrane. The protein localises to the vacuole membrane. In terms of biological role, required for cytoplasm to vacuole transport (Cvt) and autophagy as a part of the autophagy-specific VPS34 PI3-kinase complex I. This complex is essential to recruit the ATG8-phosphatidylinositol conjugate and the ATG12-ATG5 conjugate to the pre-autophagosomal structure. ATG14 mediates the specific binding of the VPS34 PI3-kinase complex I to the preautophagosomal structure (PAS). Autophagy is required for proper vegetative growth, asexual/sexual reproduction, and full virulence. Autophagy is particularly involved in the biosynthesis of deoxynivalenol (DON), an important virulence determinant. The chain is Autophagy-related protein 14 from Gibberella zeae (strain ATCC MYA-4620 / CBS 123657 / FGSC 9075 / NRRL 31084 / PH-1) (Wheat head blight fungus).